Consider the following 389-residue polypeptide: Nicotinate phosphoribosyltransferase (389 aa).

At H216 the chain carries Phosphohistidine; by autocatalysis.

This sequence belongs to the NAPRTase family. Post-translationally, transiently phosphorylated on a His residue during the reaction cycle. Phosphorylation strongly increases the affinity for substrates and increases the rate of nicotinate D-ribonucleotide production. Dephosphorylation regenerates the low-affinity form of the enzyme, leading to product release.

The catalysed reaction is nicotinate + 5-phospho-alpha-D-ribose 1-diphosphate + ATP + H2O = nicotinate beta-D-ribonucleotide + ADP + phosphate + diphosphate. Its pathway is cofactor biosynthesis; NAD(+) biosynthesis; nicotinate D-ribonucleotide from nicotinate: step 1/1. Its function is as follows. Catalyzes the synthesis of beta-nicotinate D-ribonucleotide from nicotinate and 5-phospho-D-ribose 1-phosphate at the expense of ATP. The sequence is that of Nicotinate phosphoribosyltransferase from Ralstonia pickettii (strain 12J).